Here is a 423-residue protein sequence, read N- to C-terminus: Gamma-glutamyl phosphate reductase (423 aa).

Belongs to the gamma-glutamyl phosphate reductase family.

The protein localises to the cytoplasm. It catalyses the reaction L-glutamate 5-semialdehyde + phosphate + NADP(+) = L-glutamyl 5-phosphate + NADPH + H(+). Its pathway is amino-acid biosynthesis; L-proline biosynthesis; L-glutamate 5-semialdehyde from L-glutamate: step 2/2. Functionally, catalyzes the NADPH-dependent reduction of L-glutamate 5-phosphate into L-glutamate 5-semialdehyde and phosphate. The product spontaneously undergoes cyclization to form 1-pyrroline-5-carboxylate. In Pseudomonas putida (strain ATCC 700007 / DSM 6899 / JCM 31910 / BCRC 17059 / LMG 24140 / F1), this protein is Gamma-glutamyl phosphate reductase.